The chain runs to 118 residues: Hydrogenase maturation factor HypA (118 aa).

A Ni(2+)-binding site is contributed by His2. 4 residues coordinate Zn(2+): Cys73, Cys76, Cys89, and Cys92.

Belongs to the HypA/HybF family.

Functionally, involved in the maturation of [NiFe] hydrogenases. Required for nickel insertion into the metal center of the hydrogenase. In Shewanella oneidensis (strain ATCC 700550 / JCM 31522 / CIP 106686 / LMG 19005 / NCIMB 14063 / MR-1), this protein is Hydrogenase maturation factor HypA.